A 286-amino-acid polypeptide reads, in one-letter code: Elongation factor Ts (286 aa).

An involved in Mg(2+) ion dislocation from EF-Tu region spans residues 79 to 82; it reads TDFV.

Belongs to the EF-Ts family.

The protein resides in the cytoplasm. Associates with the EF-Tu.GDP complex and induces the exchange of GDP to GTP. It remains bound to the aminoacyl-tRNA.EF-Tu.GTP complex up to the GTP hydrolysis stage on the ribosome. The sequence is that of Elongation factor Ts from Wolbachia pipientis wMel.